A 151-amino-acid polypeptide reads, in one-letter code: Nucleoside diphosphate kinase (151 aa).

ATP is bound by residues Lys9, Phe57, Arg85, Thr91, Arg102, and Asn112. The Pros-phosphohistidine intermediate role is filled by His115.

The protein belongs to the NDK family. It depends on Mg(2+) as a cofactor.

Its subcellular location is the cytoplasm. It catalyses the reaction a 2'-deoxyribonucleoside 5'-diphosphate + ATP = a 2'-deoxyribonucleoside 5'-triphosphate + ADP. It carries out the reaction a ribonucleoside 5'-diphosphate + ATP = a ribonucleoside 5'-triphosphate + ADP. In terms of biological role, major role in the synthesis of nucleoside triphosphates other than ATP. The ATP gamma phosphate is transferred to the NDP beta phosphate via a ping-pong mechanism, using a phosphorylated active-site intermediate. This chain is Nucleoside diphosphate kinase, found in Archaeoglobus fulgidus (strain ATCC 49558 / DSM 4304 / JCM 9628 / NBRC 100126 / VC-16).